Here is an 827-residue protein sequence, read N- to C-terminus: MFKPVDFSETSPVPPDIDLAPTQSPHHVAPSQDSSYDLLSRSSDDKIDAEKGPHDELSKHLPLFQKRPLSDTPISSNWNSPGITEENTPSDSPENSATNLKSLHRLHINDETQLKNAKIPTNDTTDYMPPSDGANEVTRIDLKDIKSPTRHHKRRPTTIDVPGLTKSKTSPDGLISKEDSGSKLVIVMVGLPATGKSFITNKLSRFLNYSLYYCKVFNVGNTRRKFAKEHGLKDQDSKFFEPKNADSTRLRDKWAMDTLDELLDYLLEGSGSVGIFDATNTSRERRKNVLARIRKRSPHLKVLFLESVCSDHALVQKNIRLKLFGPDYKGKDPESSLKDFKSRLANYLKAYEPIEDDENLQYIKMIDVGKKVIAYNIQGFLASQTVYYLLNFNLADRQIWITRSGESEDNVSGRIGGNSHLTPRGLRFAKSLPKFIARQREIFYQNLMQQKKNNENTDGNIYNDFFVWTSMRARTIGTAQYFNEDDYPIKQMKMLDELSAGDYDGMTYPEIKNNFPEEFEKRQKDKLRYRYPGIGGESYMDVINRLRPVITELERIEDNVLIITHRVVARALLGYFMNLSMGIIANLDVPLHCVYCLEPKPYGITWSLWEYDEASDSFSKVPQTDLNTTRVKEVGLVYNERRYSVIPTAPPSARSSFASDFLSRKRSNPTSASSSQSELSEQPKNSVSAQTGSNNTTLIGSNFNIKNENGDSRIPLSAPLMATNTSNNILDGGGTSISIHRPRVVPNQNNVNPLLANNNKAASNVPNVKKSAATPRQIFEIDKVDEKLSMLKNKSFLLHGKDYPNNADNNDNEDIRAKTMNRSQSHV.

Disordered stretches follow at residues 1 to 97 (MFKP…ENSA) and 149 to 175 (TRHHKRRPTTIDVPGLTKSKTSPDGLI). The span at 31–41 (SQDSSYDLLSR) shows a compositional bias: low complexity. Basic and acidic residues predominate over residues 42–59 (SSDDKIDAEKGPHDELSK). Residues 72–97 (TPISSNWNSPGITEENTPSDSPENSA) are compositionally biased toward polar residues. Ser92 carries the phosphoserine modification. Thr157 is subject to Phosphothreonine. 190 to 197 (GLPATGKS) provides a ligand contact to ATP. Active-site residues include Asp277 and Cys309. Arg343 provides a ligand contact to beta-D-fructose 6-phosphate. Ser404 (phosphoserine intermediate) is an active-site residue. The active site involves Glu497. Residue His565 is the Proton donor of the active site. Phosphoserine is present on residues Ser644, Ser652, Ser659, and Ser667. Disordered stretches follow at residues 649–704 (APPS…SNFN) and 799–827 (HGKDYPNNADNNDNEDIRAKTMNRSQSHV). Residues 671–682 (SASSSQSELSEQ) are compositionally biased toward low complexity. Over residues 683–704 (PKNSVSAQTGSNNTTLIGSNFN) the composition is skewed to polar residues.

The enzyme catalyses beta-D-fructose 6-phosphate + ATP = beta-D-fructose 2,6-bisphosphate + ADP + H(+). Phosphorylation results in the activation of the kinase activity. Its function is as follows. Synthesis of fructose 2,6-bisphosphate. The sequence is that of 6-phosphofructo-2-kinase 1 (PFK26) from Saccharomyces cerevisiae (strain ATCC 204508 / S288c) (Baker's yeast).